The primary structure comprises 267 residues: Phosphoethanolamine/phosphocholine phosphatase (267 aa).

Aspartate 32 acts as the Nucleophile in catalysis. Mg(2+) contacts are provided by aspartate 32 and aspartate 34. Aspartate 34 (proton donor) is an active-site residue. The substrate site is built by aspartate 43 and aspartate 123. Aspartate 203 contributes to the Mg(2+) binding site.

The protein belongs to the HAD-like hydrolase superfamily. PHOSPHO family. Mg(2+) is required as a cofactor. As to expression, expressed at sites of mineralization in bone and cartilage. Highly expressed in osteoblast cell line SaOS-2 which produces a mineralized matrix, but not in MG-63 cell line, which do not mineralize.

The protein localises to the extracellular vesicle. It carries out the reaction phosphoethanolamine + H2O = ethanolamine + phosphate. The catalysed reaction is phosphocholine + H2O = choline + phosphate. Phosphatase that has a high activity toward phosphoethanolamine (PEA) and phosphocholine (PCho). Involved in the generation of inorganic phosphate for bone mineralization. Acts in a non-redundant manner with PHOSPHO1 in skeletal mineralization: while PHOSPHO1 mediates the initiation of hydroxyapatite crystallization in the matrix vesicles (MVs), ALPL/TNAP catalyzes the spread of hydroxyapatite crystallization in the extracellular matrix. The chain is Phosphoethanolamine/phosphocholine phosphatase from Homo sapiens (Human).